Here is a 388-residue protein sequence, read N- to C-terminus: ATP phosphoribosyltransferase regulatory subunit (388 aa).

It belongs to the class-II aminoacyl-tRNA synthetase family. HisZ subfamily. In terms of assembly, heteromultimer composed of HisG and HisZ subunits.

Its subcellular location is the cytoplasm. It participates in amino-acid biosynthesis; L-histidine biosynthesis; L-histidine from 5-phospho-alpha-D-ribose 1-diphosphate: step 1/9. Functionally, required for the first step of histidine biosynthesis. May allow the feedback regulation of ATP phosphoribosyltransferase activity by histidine. This chain is ATP phosphoribosyltransferase regulatory subunit, found in Acinetobacter baylyi (strain ATCC 33305 / BD413 / ADP1).